Consider the following 117-residue polypeptide: Large ribosomal subunit protein uL18 (117 aa).

Belongs to the universal ribosomal protein uL18 family. In terms of assembly, part of the 50S ribosomal subunit; part of the 5S rRNA/L5/L18/L25 subcomplex. Contacts the 5S and 23S rRNAs.

In terms of biological role, this is one of the proteins that bind and probably mediate the attachment of the 5S RNA into the large ribosomal subunit, where it forms part of the central protuberance. This Enterobacter sp. (strain 638) protein is Large ribosomal subunit protein uL18.